The primary structure comprises 529 residues: Zinc finger CCCH domain-containing protein 65 (529 aa).

Over residues Met1–Pro10 the composition is skewed to basic and acidic residues. Disordered stretches follow at residues Met1 to Val36 and Pro134 to Val179. Positions Pro14–Ala31 are enriched in low complexity. 3 C3H1-type zinc fingers span residues Arg108 to Arg136, Gly237 to Gly265, and Arg285 to Pro313. Residues Pro313–Trp347 are disordered. Positions Gln333–Ala344 are enriched in polar residues. 2 consecutive C3H1-type zinc fingers follow at residues Arg433–Ser461 and Lys477–Asn505.

The protein is Zinc finger CCCH domain-containing protein 65 of Oryza sativa subsp. japonica (Rice).